The primary structure comprises 130 residues: uncharacterized protein (130 aa).

The tract at residues 1–34 (MTAVGGSPPTRRCPATEDRAPATVATPSSTDPTA) is disordered.

This sequence to M.tuberculosis Rv1583c.

This is an uncharacterized protein from Mycobacterium tuberculosis (strain CDC 1551 / Oshkosh).